The chain runs to 492 residues: Catalase-1 (492 aa).

Residues His65 and Asn138 contribute to the active site. Tyr348 provides a ligand contact to heme.

This sequence belongs to the catalase family. In terms of assembly, homotetramer and heterotetramer. At least six or seven isozymes are produced from a mixture of 3 gene products. Interacts with NCA1. Interacts with LSD1. Heme is required as a cofactor.

Its subcellular location is the cytoplasm. It carries out the reaction 2 H2O2 = O2 + 2 H2O. Occurs in almost all aerobically respiring organisms and serves to protect cells from the toxic effects of hydrogen peroxide. The protein is Catalase-1 (CAT1) of Arabidopsis thaliana (Mouse-ear cress).